A 413-amino-acid polypeptide reads, in one-letter code: 4-hydroxy-3-methylbut-2-en-1-yl diphosphate synthase (flavodoxin) (413 aa).

[4Fe-4S] cluster-binding residues include C298, C301, C344, and E351.

This sequence belongs to the IspG family. The cofactor is [4Fe-4S] cluster.

It carries out the reaction (2E)-4-hydroxy-3-methylbut-2-enyl diphosphate + oxidized [flavodoxin] + H2O + 2 H(+) = 2-C-methyl-D-erythritol 2,4-cyclic diphosphate + reduced [flavodoxin]. The protein operates within isoprenoid biosynthesis; isopentenyl diphosphate biosynthesis via DXP pathway; isopentenyl diphosphate from 1-deoxy-D-xylulose 5-phosphate: step 5/6. Converts 2C-methyl-D-erythritol 2,4-cyclodiphosphate (ME-2,4cPP) into 1-hydroxy-2-methyl-2-(E)-butenyl 4-diphosphate. This Koribacter versatilis (strain Ellin345) protein is 4-hydroxy-3-methylbut-2-en-1-yl diphosphate synthase (flavodoxin).